An 863-amino-acid polypeptide reads, in one-letter code: Linoleate 9S-lipoxygenase 1 (863 aa).

The region spanning 32–158 (RDFTASLLDN…KYHYNRIFFA (127 aa)) is the PLAT domain. In terms of domain architecture, Lipoxygenase spans 161–863 (SYLPSQMPEA…ARGIPNSISI (703 aa)). The interval 204–244 (NDLGEPDRDNPRPVLGGSQKHPYPRRGRTGRIPTKKDPNSE) is disordered. Fe cation-binding residues include His518, His523, His709, Asn713, and Ile863.

It belongs to the lipoxygenase family. In terms of assembly, monomer. The cofactor is Fe cation.

Its subcellular location is the cytoplasm. The enzyme catalyses (9Z,12Z)-octadecadienoate + O2 = (9S)-hydroperoxy-(10E,12Z)-octadecadienoate. Its pathway is lipid metabolism; oxylipin biosynthesis. Plant lipoxygenase may be involved in a number of diverse aspects of plant physiology including growth and development, pest resistance, and senescence or responses to wounding. This lipoxygenase introduces molecular oxygen exclusively into the C-9 position of linoleic and linolenic. This chain is Linoleate 9S-lipoxygenase 1, found in Oryza sativa subsp. japonica (Rice).